A 634-amino-acid chain; its full sequence is Putative peptidoglycan O-acetyltransferase YrhL (634 aa).

11 helical membrane-spanning segments follow: residues 10–30, 38–58, 79–99, 110–130, 145–165, 172–192, 244–264, 270–290, 307–327, 329–349, and 385–405; these read YIPGLDGLRAFAVLSVITYHL, GFIGVDIFFVLSGYLITSILL, RLLPAAYLMIFSTVVWVVLFD, AISSLFYMSNWWFIFHKLSYF, LAIEEQFYIIWPMFLVVGMYI, LAAVISLLVLCSAVMMSVLYE, FLAFCILVLCVYFTDEYEPFL, LFISVTAAILIACVCHPSSFL, YGIYLWHYPVIVLSTPVQEIG, PVFWHIVLKVIVTCILAELSY, and MSIGFIIFAILIFAGGLSGLA. The interval 413–481 is disordered; it reads KWTYSSQETN…SQQLKKPADT (69 aa). The segment covering 414–429 has biased composition (polar residues); it reads WTYSSQETNADTSQAS. Composition is skewed to basic and acidic residues over residues 430-447 and 455-470; these read GDKKNAAADKKHNPEQKT and KENKDSGQETHKKKDT.

It belongs to the acyltransferase 3 family.

It localises to the cell membrane. In Bacillus subtilis (strain 168), this protein is Putative peptidoglycan O-acetyltransferase YrhL (yrhL).